Reading from the N-terminus, the 690-residue chain is Glycine--tRNA ligase beta subunit (690 aa).

This sequence belongs to the class-II aminoacyl-tRNA synthetase family. As to quaternary structure, tetramer of two alpha and two beta subunits.

It localises to the cytoplasm. The enzyme catalyses tRNA(Gly) + glycine + ATP = glycyl-tRNA(Gly) + AMP + diphosphate. In Syntrophus aciditrophicus (strain SB), this protein is Glycine--tRNA ligase beta subunit.